The primary structure comprises 194 residues: uncharacterized protein (194 aa).

The tract at residues 45-138 is disordered; that stretch reads QLLGVPEQHR…AGPPRGDWGV (94 aa). Phosphoserine occurs at positions 69 and 76. Pro residues predominate over residues 97–106; the sequence is PPLPPPPVLP. Residues 107-116 show a composition bias toward low complexity; the sequence is GPGEELPGAR. Over residues 117–128 the composition is skewed to gly residues; the sequence is LPGGGGDDGAGR.

This is an uncharacterized protein from Homo sapiens (Human).